The sequence spans 74 residues: Protein SlyX homolog (74 aa).

It belongs to the SlyX family.

In Neisseria meningitidis serogroup A / serotype 4A (strain DSM 15465 / Z2491), this protein is Protein SlyX homolog.